We begin with the raw amino-acid sequence, 321 residues long: Lipoyl synthase (321 aa).

Cys68, Cys73, Cys79, Cys94, Cys98, Cys101, and Ser308 together coordinate [4Fe-4S] cluster. The 218-residue stretch at 80-297 folds into the Radical SAM core domain; that stretch reads FNHGTATFMI…KEEAMAMGFT (218 aa).

The protein belongs to the radical SAM superfamily. Lipoyl synthase family. The cofactor is [4Fe-4S] cluster.

The protein resides in the cytoplasm. The enzyme catalyses [[Fe-S] cluster scaffold protein carrying a second [4Fe-4S](2+) cluster] + N(6)-octanoyl-L-lysyl-[protein] + 2 oxidized [2Fe-2S]-[ferredoxin] + 2 S-adenosyl-L-methionine + 4 H(+) = [[Fe-S] cluster scaffold protein] + N(6)-[(R)-dihydrolipoyl]-L-lysyl-[protein] + 4 Fe(3+) + 2 hydrogen sulfide + 2 5'-deoxyadenosine + 2 L-methionine + 2 reduced [2Fe-2S]-[ferredoxin]. It functions in the pathway protein modification; protein lipoylation via endogenous pathway; protein N(6)-(lipoyl)lysine from octanoyl-[acyl-carrier-protein]: step 2/2. Its function is as follows. Catalyzes the radical-mediated insertion of two sulfur atoms into the C-6 and C-8 positions of the octanoyl moiety bound to the lipoyl domains of lipoate-dependent enzymes, thereby converting the octanoylated domains into lipoylated derivatives. In Serratia proteamaculans (strain 568), this protein is Lipoyl synthase.